Reading from the N-terminus, the 755-residue chain is Leucine-rich repeat-containing protein 36 (755 aa).

LRR repeat units lie at residues 51–72 (SLRS…QYLC) and 73–94 (SLQE…SRLQ). In terms of domain architecture, LRRCT spans 107–146 (NPVVRKDTDYRLFAVYTLQTLEKLDDRAVRDSERRAAKLH). Disordered stretches follow at residues 354–374 (GKNY…TTSH) and 448–517 (LPPG…PPIS). Residues 356–370 (NYREHSIKPSQDKKA) show a composition bias toward basic and acidic residues. The span at 498-510 (LSSDLGSLHGLSG) shows a compositional bias: low complexity. Positions 601-671 (VESLKQKLVK…ELTQLKRLEE (71 aa)) form a coiled coil. The segment at 701-755 (YSGKSLLPPEKSHPLGRSSPFGKSTLSSSSPMVHDTGQYLIQSVSEADPEPSLWS) is disordered. A compositionally biased stretch (polar residues) spans 721–731 (FGKSTLSSSSP).

The chain is Leucine-rich repeat-containing protein 36 (Lrrc36) from Mus musculus (Mouse).